Reading from the N-terminus, the 188-residue chain is Large ribosomal subunit protein bL35m (188 aa).

It belongs to the bacterial ribosomal protein bL35 family.

It localises to the mitochondrion. The sequence is that of Large ribosomal subunit protein bL35m (Mrpl35) from Mus musculus (Mouse).